The sequence spans 484 residues: 1,4-beta-D-glucan cellobiohydrolase CEL6A (484 aa).

The N-terminal stretch at 1-17 (MAKRLLLTAALAATTLA) is a signal peptide. The CBM1 domain maps to 26–62 (NCGSVWSQCGGQGWTGATCCASGSTCVAQNQWYSQCL). 2 disulfide bridges follow: cysteine 34–cysteine 51 and cysteine 45–cysteine 61. The interval 68–98 (TTTAQAPSSTRTTTSSSSRPTSSSISTSAVN) is disordered. Substrate is bound by residues tryptophan 171 and aspartate 173. Asparagine 175 carries N-linked (GlcNAc...) asparagine glycosylation. The tract at residues 208-230 (YDLPDRDCAAAASNGEWAIADGG) is substrate binding loop 1. Residue aspartate 260 is the Proton donor of the active site. Substrate is bound by residues histidine 305, tryptophan 308, asparagine 344, tryptophan 405, lysine 433, and glutamate 437. The substrate binding loop 2 stretch occupies residues 431–469 (WIKPGGECDGTSDTTAARYDHHCGFADALKPAPEAGQWF). The Proton acceptor role is filled by aspartate 439.

It belongs to the glycosyl hydrolase 6 (cellulase B) family. As to quaternary structure, monomer. In terms of processing, both N- and O-glycosylated.

It is found in the secreted. It catalyses the reaction Hydrolysis of (1-&gt;4)-beta-D-glucosidic linkages in cellulose and cellotetraose, releasing cellobiose from the non-reducing ends of the chains.. Exoglucanase that plays an important function in biomass degradation by catalyzing the hydrolysis of the non-reducing end beta-1,4-glucosidic linkages in cellulose and cellotetraose to release cellobiose. Hydrolyzes crystalline and amorphous cellulose but is inactive on hydroxyethyl cellulose, mannan, galactomannan, xyloglucan, arabinoxylan, arabinan, xylan, and pectin. The chain is 1,4-beta-D-glucan cellobiohydrolase CEL6A from Podospora anserina (strain S / ATCC MYA-4624 / DSM 980 / FGSC 10383) (Pleurage anserina).